The following is a 430-amino-acid chain: Putative membrane fusion protein SilB (430 aa).

The first 28 residues, Met1–Gln28, serve as a signal peptide directing secretion. The tract at residues Arg407–His430 is disordered. A compositionally biased stretch (polar residues) spans Asn414–His430.

This sequence belongs to the membrane fusion protein (MFP) (TC 8.A.1) family.

Component of the sil cation efflux system that confers resistance to silver. May be part of a three-component cation/proton antiporter. This is Putative membrane fusion protein SilB (silB) from Salmonella typhimurium.